The chain runs to 626 residues: MTVEERQGRVGGHGVSGGGGGRDQFPVGMRVLAVDDDPTCLKILENLLLRCQYHVTTTGQAATALKLLRENKDQFDLVISDVHMPDMDGFKLLELVGLEMDLPVIMLSANGETQTVMKGITHGACDYLLKPVRLEQLRTIWQHVIRRKNCDAKNRGNDDDAGQKAQGMNNEGESIGANRNKRQSRKSRDENGDDGDDSDENSNENGDSSTQKKPRVVWSVELHRKFVAAVNQLGIEKAVPKKILDLMNVENITRENVASHLQKYRLYLKRLSTDASRQANLAAAFGGRNPAYINMNSFGNYNAYGRYRTVPTAGHTQANNILTRMNSPSAFGVHGLLHSQPIQLGHAQNNLSTSLNDLGGLNNGNMIRGAQMSTILTGPSGNSFPNISNGAPLATANRSLQPLESSSQQHLSRVHSSSADPFSTLVGESPQFPDLGRTTNTWQTAVPSNIQDRGHNDNMSQATLHMNGPKIEPVSSFTSSNQIPLLGNEMQGQVASLASNVPIAFNQDTSPFNYGSSTNSRDMLNNSHVFSNSSINTSLPNLSLDNPAVPKQTLDRGNTGIVSPMQDGRIHHQAVSNQLNYNDDLMRTTGLQRGLSGGLDDIVVDMFRPDREDDGVPYIDGDWELV.

The tract at residues 1–22 is disordered; it reads MTVEERQGRVGGHGVSGGGGGR. Residues 9–22 show a composition bias toward gly residues; the sequence is RVGGHGVSGGGGGR. The region spanning 30-145 is the Response regulatory domain; it reads RVLAVDDDPT…QLRTIWQHVI (116 aa). Residue D81 is modified to 4-aspartylphosphate. Over residues 151–162 the composition is skewed to basic and acidic residues; it reads DAKNRGNDDDAG. 2 disordered regions span residues 151–215 and 400–440; these read DAKN…KKPR and LQPL…RTTN. Positions 191 to 202 are enriched in acidic residues; sequence NGDDGDDSDENS. Positions 210-269 form a DNA-binding region, myb-like GARP; the sequence is TQKKPRVVWSVELHRKFVAAVNQLGIEKAVPKKILDLMNVENITRENVASHLQKYRLYLK. The span at 400–421 shows a compositional bias: polar residues; that stretch reads LQPLESSSQQHLSRVHSSSADP.

Belongs to the ARR family. Type-B subfamily. Two-component system major event consists of a His-to-Asp phosphorelay between a sensor histidine kinase (HK) and a response regulator (RR). In plants, the His-to-Asp phosphorelay involves an additional intermediate named Histidine-containing phosphotransfer protein (HPt). This multistep phosphorelay consists of a His-Asp-His-Asp sequential transfer of a phosphate group between first a His and an Asp of the HK protein, followed by the transfer to a conserved His of the HPt protein and finally the transfer to an Asp in the receiver domain of the RR protein.

The protein resides in the nucleus. Its function is as follows. Transcriptional activator that binds specific DNA sequence. Functions as a response regulator involved in His-to-Asp phosphorelay signal transduction system. Phosphorylation of the Asp residue in the receiver domain activates the ability of the protein to promote the transcription of target genes. May directly activate some type-A response regulators in response to cytokinins. The protein is Two-component response regulator ORR24 of Oryza sativa subsp. indica (Rice).